The chain runs to 616 residues: Zinc metalloproteinase-disintegrin-like VLAIP-A (616 aa).

The N-terminal stretch at 1 to 20 is a signal peptide; sequence MMQVLLVTISLAVFPYQGSS. A propeptide spanning residues 21–194 is cleaved from the precursor; the sequence is IILESGNVND…KASQLNLTPE (174 aa). Gln195 is subject to Pyrrolidone carboxylic acid. The Peptidase M12B domain occupies 203 to 399; that stretch reads KYIKLVIVAD…KMPQCILNKP (197 aa). Disulfide bonds link Cys314-Cys394, Cys354-Cys378, and Cys356-Cys361. Position 339 (His339) interacts with Zn(2+). Residue Glu340 is part of the active site. His343 and His349 together coordinate Zn(2+). Asn377 is a glycosylation site (N-linked (GlcNAc...) asparagine). The Disintegrin domain occupies 407-493; it reads PAVCGNYLVE…ECPTDQFQRN (87 aa). Positions 409, 412, 414, 416, 419, and 422 each coordinate Ca(2+). Cystine bridges form between Cys410–Cys439, Cys421–Cys434, Cys423–Cys429, Cys433–Cys456, Cys447–Cys453, Cys452–Cys478, Cys465–Cys485, Cys472–Cys504, Cys497–Cys509, Cys516–Cys566, Cys531–Cys577, Cys544–Cys554, Cys561–Cys603, and Cys597–Cys609. Residues 471–473 carry the D/ECD-tripeptide motif; the sequence is ECD.

This sequence belongs to the venom metalloproteinase (M12B) family. P-III subfamily. P-IIIc sub-subfamily. Heterodimer; disulfide-linked. Zn(2+) serves as cofactor. In terms of processing, the N-terminus is blocked. Expressed by the venom gland.

It is found in the secreted. With respect to regulation, inhibited by EDTA or 1,10-phenanthroline. Not inhibited by PMSF. In terms of biological role, snake venom zinc metalloprotease that hydrolyzes the alpha-chain (FGA) and more slowly the beta-chain (FGB) of fibrinogen, without affecting the gamma-chain. Cleaves alpha-chain of fibrinogen at '432-Lys-|-Leu-433' and '535-Pro-|-Met-536' bonds. Induces apoptosis in vascular endothelial cells and inhibits endothelial cell adhesion to extracellular matrix proteins such as fibrinogen, fibronectin, vitronectin, collagen I, and collagen IV. Also hydrolyzes azocasein, and insulin B-chain (at the '38-Ala-|-Leu-39' bond). The polypeptide is Zinc metalloproteinase-disintegrin-like VLAIP-A (Macrovipera lebetinus (Levantine viper)).